Here is a 64-residue protein sequence, read N- to C-terminus: Large ribosomal subunit protein uL29 (64 aa).

The protein belongs to the universal ribosomal protein uL29 family.

The chain is Large ribosomal subunit protein uL29 from Burkholderia ambifaria (strain MC40-6).